Reading from the N-terminus, the 304-residue chain is MKPFTFYEAIESNKRKTWFIVFIIYFLLFFVCYAVVSYFELGEIGIIIAFLIVLFTNYYAYQKSNEIILNYSGVREPTREEYPYLLNVVEGLSIAAGIPTPKIYIMDDPSPNAFATGKDPQNSVVVVTKGLLDILNRTELEGVIAHEISHIKNYDVRLQTIAAVMVGLIVILGDGLKRSFYYSKRRRDKDENILGIVSLIIAILAPFLATLLRFALSRQREYMADASAAMLTRYPEGLASALEKIAKNFQPIKRANVMTAPLYIVNPLSSNAVSKLFSTHPPIEERIRRLRMMGERWKMLDKEG.

The next 2 helical transmembrane spans lie at 19–39 (FIVF…VSYF) and 41–61 (LGEI…YYAY). Residue His146 coordinates Zn(2+). Glu147 is an active-site residue. His150 serves as a coordination point for Zn(2+). Helical transmembrane passes span 156-176 (VRLQ…GDGL) and 192-212 (NILG…ATLL). Glu221 is a Zn(2+) binding site.

The protein belongs to the peptidase M48B family. It depends on Zn(2+) as a cofactor.

The protein resides in the cell inner membrane. This is Protease HtpX homolog from Dictyoglomus turgidum (strain DSM 6724 / Z-1310).